The primary structure comprises 325 residues: D-alanine--D-alanine ligase (325 aa).

Positions 107–311 constitute an ATP-grasp domain; that stretch reads KRLLLSESLP…YEALCVEVLK (205 aa). 137–192 contributes to the ATP binding site; the sequence is VDTLGLPLIVKPAREGSSLGLSKVTERAAMAAAVALAEKMDADILCEQFISGDEVT. Mg(2+) is bound by residues aspartate 264, glutamate 278, and asparagine 280.

It belongs to the D-alanine--D-alanine ligase family. The cofactor is Mg(2+). Mn(2+) is required as a cofactor.

The protein resides in the cytoplasm. The catalysed reaction is 2 D-alanine + ATP = D-alanyl-D-alanine + ADP + phosphate + H(+). Its pathway is cell wall biogenesis; peptidoglycan biosynthesis. Its function is as follows. Cell wall formation. This Polaromonas naphthalenivorans (strain CJ2) protein is D-alanine--D-alanine ligase.